The following is a 248-amino-acid chain: Metallo-beta-lactamase type 2 (248 aa).

A signal peptide spans M1 to G21. 5 residues coordinate Zn(2+): H97, H99, D101, H160, and C179. A substrate-binding site is contributed by K182. A Zn(2+)-binding site is contributed by H221.

This sequence belongs to the metallo-beta-lactamase superfamily. Class-B beta-lactamase family. As to quaternary structure, monomer. It depends on Zn(2+) as a cofactor.

It localises to the periplasm. The enzyme catalyses a beta-lactam + H2O = a substituted beta-amino acid. In terms of biological role, confers resistance to the different beta-lactams antibiotics (penicillin, cephalosporin and carbapenem) via the hydrolysis of the beta-lactam ring. In Elizabethkingia meningoseptica (Chryseobacterium meningosepticum), this protein is Metallo-beta-lactamase type 2 (blaB8).